Here is a 591-residue protein sequence, read N- to C-terminus: DDB1- and CUL4-associated factor 8 (591 aa).

Basic and acidic residues predominate over residues 1 to 14; that stretch reads MSSKRPSTDGRRDL. The disordered stretch occupies residues 1–140; that stretch reads MSSKRPSTDG…EDWVSSETTA (140 aa). Phosphoserine occurs at positions 21 and 22. A Nuclear export signal motif is present at residues 39–50; that stretch reads IEVEASDLSLSL. Basic and acidic residues-rich tracts occupy residues 65–99 and 118–131; these read RGTD…HGHS and SRDQ…RALE. Ser99, Ser123, and Ser124 each carry phosphoserine. 7 WD repeats span residues 185–224, 228–269, 275–315, 323–363, 379–418, 426–466, and 470–509; these read GHTG…PVLD, GHKS…CCKN, QHKG…PASK, EKKV…ENEN, ESKA…GAQY, RNNA…IIQF, and DKGG…STEL. Residue Arg198 is modified to Omega-N-methylarginine; by PRMT1. The tract at residues 552–591 is disordered; that stretch reads HRRWREPGVGATDADSDESPSSSDTSDEEEGPDRVQCMPS.

It belongs to the WD repeat DCAF8 family. As to quaternary structure, interacts with DDB1, CUL4A and CUL4B. Interacts with KPNA1, KPNB1 and XPO1.

The protein resides in the nucleus. It is found in the cytoplasm. It functions in the pathway protein modification; protein ubiquitination. Its function is as follows. May function as a substrate receptor for CUL4-DDB1 E3 ubiquitin-protein ligase complex. The sequence is that of DDB1- and CUL4-associated factor 8 (Dcaf8) from Rattus norvegicus (Rat).